Consider the following 907-residue polypeptide: Avirulence protein A (907 aa).

Polar residues-rich tracts occupy residues 1 to 11 (MWNVSKSSNNL) and 124 to 136 (AGSNGDINKSSDP). Disordered stretches follow at residues 1 to 47 (MWNV…HDQL) and 116 to 157 (NDDF…KKSY).

The protein is Avirulence protein A (avrA) of Pseudomonas savastanoi pv. glycinea (Pseudomonas syringae pv. glycinea).